The primary structure comprises 141 residues: uncharacterized protein (141 aa).

Residues 1 to 61 (IRLLHSLTPP…PPPPPPPRRA (61 aa)) form a disordered region. The span at 8 to 58 (TPPPPPPPPPPPPPPPPPPPPPPPPPPPPPPPPPPPPPPPPPPPPPPPPPP) shows a compositional bias: pro residues. A DNA-binding region (H-T-H motif) is located at residues 98-116 (KRLLVAYPVRHFLSAACQF).

This is an uncharacterized protein from Owenia fusiformis (Polychaete worm).